The following is a 638-amino-acid chain: MQRICPAHCSVTHSLTMKSMRLSYIPPAASAAPQSPSYGRKKNASAAPPSAAASTTVLTSPLVTTTRTPKQTEQEDEQLVAKTKTTRTVIATTNGRAAPSQSRPRRRPAPAAAASAASLPMTFCNALEEVINTFIDPPALRPAVDPRNVLTSNFVPVDELPPTPCPVVRGAIPRCLAGGAYIRNGPNPQHLPRGPHHLFDGDGMLHSLLLPSPASSGDDPVLCSRYVQTYKYLVERDAGAPVLPNVFSGFHGVAGMARGAVVAARVLTGQMNPLEGVGLANTSLAYFAGRLYALGESDLPYAVRVHPDTGEVTTHGRCDFGGRLVMGMTAHPKKDPVTGELFAFRYGPVPPFVTYFRFDPAGNKGADVPIFSVQQPSFLHDFAITERYAIFPEIQIVMKPMDMVVGGGSPVGSDPGKVPRLGVIPRYATDESEMRWFEVPGFNIMHSVNAWEEAGGEELVLVAPNVLSIEHALEHMELVHSCVEKVRINLRTGVVTRTPLAAGNFDFPVINPAFLGRRNRYGYFGVGDPAPKIGGVAKLDFDRAGEGDCTVAQRDFGPGCFAGEPFFVADDVEGNGNEDDGYLVCYVHDEATGENRFVVMDARSPDLEIVAEVQLPGRVPYGFHGLFVTQAELQSQHQ.

The N-terminal 80 residues, 1-80, are a transit peptide targeting the chloroplast; sequence MQRICPAHCS…QTEQEDEQLV (80 aa). Composition is skewed to low complexity over residues 28 to 37, 44 to 69, and 92 to 102; these read AASAAPQSPS, ASAA…TRTP, and TTNGRAAPSQS. Disordered stretches follow at residues 28 to 80 and 92 to 113; these read AASA…EQLV and TTNG…PAAA. Fe cation-binding residues include His331, His380, His446, and His624.

This sequence belongs to the carotenoid oxygenase family. Fe(2+) is required as a cofactor.

It localises to the plastid. It is found in the chloroplast. It carries out the reaction a 9-cis-epoxycarotenoid + O2 = a 12'-apo-carotenal + 2-cis,4-trans-xanthoxin. It catalyses the reaction 9-cis-violaxanthin + O2 = (3S,5R,6S)-5,6-epoxy-3-hydroxy-5,6-dihydro-12'-apo-beta-caroten-12'-al + 2-cis,4-trans-xanthoxin. The catalysed reaction is 9'-cis-neoxanthin + O2 = (3S,5R,6R)-3,5-dihydroxy-6,7-didehydro-5,6-dihydro-12'-apo-beta-caroten-12'-al + 2-cis,4-trans-xanthoxin. Its function is as follows. Has a 11,12(11',12') 9-cis epoxycarotenoid cleavage activity. Catalyzes the first step of abscisic-acid biosynthesis from carotenoids. The sequence is that of 9-cis-epoxycarotenoid dioxygenase NCED1, chloroplastic from Oryza sativa subsp. japonica (Rice).